Here is a 340-residue protein sequence, read N- to C-terminus: Phosphate acyltransferase (340 aa).

The protein belongs to the PlsX family. As to quaternary structure, homodimer. Probably interacts with PlsY.

Its subcellular location is the cytoplasm. It carries out the reaction a fatty acyl-[ACP] + phosphate = an acyl phosphate + holo-[ACP]. The protein operates within lipid metabolism; phospholipid metabolism. Functionally, catalyzes the reversible formation of acyl-phosphate (acyl-PO(4)) from acyl-[acyl-carrier-protein] (acyl-ACP). This enzyme utilizes acyl-ACP as fatty acyl donor, but not acyl-CoA. This chain is Phosphate acyltransferase, found in Leptospira biflexa serovar Patoc (strain Patoc 1 / ATCC 23582 / Paris).